A 213-amino-acid polypeptide reads, in one-letter code: Andrastin A biosynthesis cluster protein B (213 aa).

In terms of biological role, part of the gene cluster that mediates the biosynthesis of andrastins, meroterpenoid compounds that exhibit inhibitory activity against ras farnesyltransferase, suggesting that they could be promising leads for antitumor agents. The first step of the pathway is the synthesis of 3,5-dimethylorsellinic acid (DMOA) by the polyketide synthase adrD via condensation of one acetyl-CoA starter unit with 3 malonyl-CoA units and 2 methylations. DMAO is then converted to farnesyl-DMAO by the prenyltransferase adrG. The methyltransferase adrK catalyzes the methylation of the carboxyl group of farnesyl-DMAO to farnesyl-DMAO methyl ester which is further converted to epoxyfarnesyl-DMAO methyl ester by the FAD-dependent monooxygenase adrH. The terpene cyclase adrI then catalyzes the carbon skeletal rearrangement to generate the andrastin E, the first compound in the pathway having the andrastin scaffold, with the tetracyclic ring system. The post-cyclization tailoring enzymes adrF, adrE, adrJ, and adrA, are involved in the conversion of andrastin E into andrastin A. The short chain dehydrogenase adrF is responsible for the oxidation of the C-3 a hydroxyl group of andrastin E to yield the corresponding ketone, andrastin D. The ketoreductase adrE stereoselectively reduces the carbonyl moiety to reverse the stereochemistry of the C-3 position to yield andrastin F. The acetyltransferase adrJ is the acetyltransferase that attaches the acetyl group to the C-3 hydroxyl group of andrastin F to yield andrastin C. Finally, the cytochrome P450 monooxygenase adrA catalyzes two sequential oxidation reactions of the C-23 methyl group, to generate the corresponding alcohol andrastin B, and aldehyde andrastin A. This chain is Andrastin A biosynthesis cluster protein B, found in Penicillium rubens (strain ATCC 28089 / DSM 1075 / NRRL 1951 / Wisconsin 54-1255) (Penicillium chrysogenum).